The primary structure comprises 546 residues: Glutamyl-tRNA(Gln) amidotransferase subunit A, chloroplastic/mitochondrial (546 aa).

A disordered region spans residues 21–52; sequence KRRRFHSSTPLFLSQPQTLASTDPPSSPPQSQ. Residues 27–43 are compositionally biased toward polar residues; the sequence is SSTPLFLSQPQTLASTD. Catalysis depends on charge relay system residues Lys-123 and Ser-198. Ser-222 serves as the catalytic Acyl-ester intermediate.

It belongs to the amidase family. GatA subfamily. In terms of assembly, subunit of the heterotrimeric GatCAB amidotransferase (AdT) complex, composed of A, B and C subunits.

Its subcellular location is the mitochondrion. The protein resides in the plastid. The protein localises to the chloroplast stroma. It carries out the reaction L-glutamyl-tRNA(Gln) + L-glutamine + ATP + H2O = L-glutaminyl-tRNA(Gln) + L-glutamate + ADP + phosphate + H(+). Allows the formation of correctly charged Gln-tRNA(Gln) through the transamidation of misacylated Glu-tRNA(Gln) in chloroplasts and mitochondria. The reaction takes place in the presence of glutamine and ATP through an activated gamma-phospho-Glu-tRNA(Gln). This chain is Glutamyl-tRNA(Gln) amidotransferase subunit A, chloroplastic/mitochondrial, found in Vitis vinifera (Grape).